The chain runs to 344 residues: UPF0283 membrane protein YcjF (344 aa).

Transmembrane regions (helical) follow at residues 70-90 (MVMGGLALFGASVVGQGVQWT), 100-120 (VALGGCAAGALIIGAGVGSVV), and 213-233 (ESTLMIAVSPLALVDMAFIAW).

It belongs to the UPF0283 family.

It is found in the cell inner membrane. The protein is UPF0283 membrane protein YcjF of Shigella dysenteriae serotype 1 (strain Sd197).